The following is a 236-amino-acid chain: DNA repair and recombination protein RadB (236 aa).

Belongs to the eukaryotic RecA-like protein family. RadB subfamily.

Functionally, involved in DNA repair and in homologous recombination. May regulate the cleavage reactions of the branch-structured DNA. Has a very weak ATPase activity that is not stimulated by DNA. Binds DNA but does not promote DNA strands exchange. This is DNA repair and recombination protein RadB from Halobacterium salinarum (strain ATCC 29341 / DSM 671 / R1).